The primary structure comprises 80 residues: Protein pegasus (80 aa).

A signal peptide spans 1-22 (MKLSAVLLAIALLALSLVQCLG). One can recognise a Kazal-like domain in the interval 24–80 (PDPSTKCVMECDTQEYRSICAADDKGSTKTYRNLCVMKTENCLQNANFQKISDKECP). Disulfide bonds link Cys-30–Cys-65, Cys-34–Cys-58, and Cys-43–Cys-79.

As to quaternary structure, interacts with wg; the interaction facilitates short-range diffusion of wg. In terms of tissue distribution, strongly expressed in the developing fly wing but is excluded from the presumptive wing margin.

It is found in the secreted. In terms of biological role, increases short-range diffusion of the wingless/wg protein, enhancing its signaling and expression of target genes required for wing margin morphogenesis. May act as a serine protease inhibitor since it possess the Kazal serine protease inhibitor signature. In Drosophila melanogaster (Fruit fly), this protein is Protein pegasus.